The chain runs to 283 residues: Large ribosomal subunit protein uL2c (283 aa).

Residues 229–274 are disordered; sequence GVVMNPIDHPHGGGEGKVPIGRKKPLTPWGHPALGRKSRKRRKYSD. Residues 262–271 are compositionally biased toward basic residues; that stretch reads LGRKSRKRRK.

This sequence belongs to the universal ribosomal protein uL2 family. As to quaternary structure, part of the 50S ribosomal subunit.

The protein localises to the plastid. This is Large ribosomal subunit protein uL2c (rpl2) from Aneura mirabilis (Parasitic liverwort).